Reading from the N-terminus, the 764-residue chain is E3 ubiquitin-protein ligase CBL-B-B (764 aa).

Residues 1–19 show a composition bias toward low complexity; that stretch reads MASSSSSSSNSSTSSSALS. The interval 1 to 27 is disordered; the sequence is MASSSSSSSNSSTSSSALSGRLPGARS. The 4H stretch occupies residues 48 to 180; it reads PPKQAAADRR…KAIFPSGQFQ (133 aa). One can recognise a Cbl-PTB domain in the interval 48–356; the sequence is PPKQAAADRR…GRSYNPDLTD (309 aa). An EF-hand-like region spans residues 181–253; it reads GDTFRITKAD…FEFDIFARLF (73 aa). Ca(2+)-binding residues include D234, T236, N238, Y240, and E245. An SH2-like region spans residues 254-356; it reads QPWSSILRNW…GRSYNPDLTD (103 aa). R299 contributes to the 4-O-phospho-L-tyrosine binding site. The linker stretch occupies residues 357-385; that stretch reads LCEPTPHDHIKVTQEQYELYCEMGSTFQL. The RING-type zinc finger occupies 386 to 425; that stretch reads CKICAENDKDVKIEPCGHLMCTSCLTSWQESDGQGCPFCR. Disordered stretches follow at residues 482-583 and 707-726; these read MNER…SRTC and KVRNSAEEDDSEYKIPSSHP. The span at 485–498 shows a compositional bias: polar residues; the sequence is RQNSPVTSPGSSPL. Over residues 556–578 the composition is skewed to pro residues; that stretch reads LPAPPPPLREPPPPPERPPPIPP.

In terms of assembly, interacts with several SH3 domain-containing proteins and with poly-ubiquitinated proteins.

Its subcellular location is the cytoplasm. The catalysed reaction is S-ubiquitinyl-[E2 ubiquitin-conjugating enzyme]-L-cysteine + [acceptor protein]-L-lysine = [E2 ubiquitin-conjugating enzyme]-L-cysteine + N(6)-ubiquitinyl-[acceptor protein]-L-lysine.. Its pathway is protein modification; protein ubiquitination. In terms of biological role, E3 ubiquitin-protein ligase which accepts ubiquitin from specific E2 ubiquitin-conjugating enzymes, and transfers it to substrates, generally promoting their degradation by the proteasome. This chain is E3 ubiquitin-protein ligase CBL-B-B (cblb-b), found in Xenopus laevis (African clawed frog).